Here is a 293-residue protein sequence, read N- to C-terminus: Undecaprenyl-diphosphatase (293 aa).

5 consecutive transmembrane segments (helical) span residues 107–127 (WMIIVATIPVVVLGVLGKDLI), 134–154 (MWITATVLVLFSFVFILAEKV), 207–227 (FSFLLAIPAVLGSGLYSLPDA), 243–263 (IGTLVAFLVGYASIAWLMKFV), and 268–288 (FSWFAAYRIPAGLLVMLLLWL).

The protein belongs to the UppP family.

It localises to the cell membrane. It catalyses the reaction di-trans,octa-cis-undecaprenyl diphosphate + H2O = di-trans,octa-cis-undecaprenyl phosphate + phosphate + H(+). Functionally, catalyzes the dephosphorylation of undecaprenyl diphosphate (UPP). Confers resistance to bacitracin. This is Undecaprenyl-diphosphatase from Corynebacterium efficiens (strain DSM 44549 / YS-314 / AJ 12310 / JCM 11189 / NBRC 100395).